The following is a 368-amino-acid chain: MKDREIFAGLMSGTSLDGVDTALASFQGELPETIATSFTPFPSDLKYKLHHLAVADSWRPDELFAAESQLTLLYAEAINDLLQSADIDRSRIHAIGCHGQTIRHRPAINWPYTCQLGNPSLLAEKTGITVIADFRRRDIAAGGEGAPLAPAFHMHVLQHRFPNCAVVNIGGIANITQWSEKANAVVGFDCGPGNILMDAWCSQAFQQNCDHGGQIARTGSINHALLQEMKKEPFFSLSAPKSTGRELFNHDWLQANLQKTASVDDRDILATLTELTAQTICEALNTNTLTHLFVCGGGAHNLFLMERLSRHLPGILVKGTDSAGIDPDFMEAMAFAWLAMRTLARLPGNIPAVTRAQGERILGAIYPA.

13 to 20 (GTSLDGVD) lines the ATP pocket.

It belongs to the anhydro-N-acetylmuramic acid kinase family.

It catalyses the reaction 1,6-anhydro-N-acetyl-beta-muramate + ATP + H2O = N-acetyl-D-muramate 6-phosphate + ADP + H(+). The protein operates within amino-sugar metabolism; 1,6-anhydro-N-acetylmuramate degradation. It participates in cell wall biogenesis; peptidoglycan recycling. Functionally, catalyzes the specific phosphorylation of 1,6-anhydro-N-acetylmuramic acid (anhMurNAc) with the simultaneous cleavage of the 1,6-anhydro ring, generating MurNAc-6-P. Is required for the utilization of anhMurNAc either imported from the medium or derived from its own cell wall murein, and thus plays a role in cell wall recycling. In Hahella chejuensis (strain KCTC 2396), this protein is Anhydro-N-acetylmuramic acid kinase.